The following is a 593-amino-acid chain: Zinc metalloproteinase-disintegrin-like atrase-B (593 aa).

A signal peptide spans 1-20; it reads MIQALLVIICLAVFPHQGSS. Residues 21-191 constitute a propeptide that is removed on maturation; sequence IILESGNVND…DESIEKTSQL (171 aa). The region spanning 205-400 is the Peptidase M12B domain; sequence KYIEFYVIVD…DRPQCILNKP (196 aa). 2 residues coordinate Ca(2+): Glu-208 and Asp-292. Intrachain disulfides connect Cys-316–Cys-395, Cys-356–Cys-379, and Cys-358–Cys-363. The N-linked (GlcNAc...) asparagine glycan is linked to Asn-319. Position 341 (His-341) interacts with Zn(2+). Glu-342 is a catalytic residue. Zn(2+) contacts are provided by His-345 and His-351. Ca(2+) contacts are provided by Cys-395, Asn-398, Ile-410, Asn-413, Phe-415, Glu-417, Glu-420, and Asp-423. A Disintegrin domain is found at 408–477; that stretch reads PPICGNYFVE…ECPTDSLQRN (70 aa). Cystine bridges form between Cys-422–Cys-435, Cys-424–Cys-430, Cys-434–Cys-440, Cys-449–Cys-469, Cys-456–Cys-488, Cys-481–Cys-493, Cys-500–Cys-550, Cys-515–Cys-558, Cys-528–Cys-538, Cys-545–Cys-581, and Cys-575–Cys-586. The D/ECD-tripeptide signature appears at 455–457; that stretch reads DCD. 4 residues coordinate Ca(2+): Asp-457, Leu-458, Glu-460, and Asp-472. An N-linked (GlcNAc...) asparagine glycan is attached at Asn-490.

This sequence belongs to the venom metalloproteinase (M12B) family. P-III subfamily. P-IIIa sub-subfamily. Monomer. Requires Zn(2+) as cofactor. In terms of tissue distribution, expressed by the venom gland.

It is found in the secreted. Inhibited by EDTA, EGTA, 1,10-phenanthroline and DTT. Not inhibited by PMSF and SBTI. In terms of biological role, snake venom zinc protease that inhibits the classical and alternative pathways of complement by cleaving factor B, C6, C7, and C8. Also slowly and selectively degrades alpha-chain of fibrinogen (FGA), and shows edema-inducing activity. The polypeptide is Zinc metalloproteinase-disintegrin-like atrase-B (Naja atra (Chinese cobra)).